The chain runs to 241 residues: Uridylate kinase (241 aa).

Lysine 12–glycine 15 provides a ligand contact to ATP. Residue glycine 54 coordinates UMP. ATP-binding residues include glycine 55 and arginine 59. Residues aspartate 74 and valine 135–threonine 142 each bind UMP. ATP is bound by residues threonine 162, tyrosine 168, and aspartate 171.

The protein belongs to the UMP kinase family. Homohexamer.

The protein resides in the cytoplasm. The enzyme catalyses UMP + ATP = UDP + ADP. It participates in pyrimidine metabolism; CTP biosynthesis via de novo pathway; UDP from UMP (UMPK route): step 1/1. Inhibited by UTP. Catalyzes the reversible phosphorylation of UMP to UDP. The sequence is that of Uridylate kinase from Sphingopyxis alaskensis (strain DSM 13593 / LMG 18877 / RB2256) (Sphingomonas alaskensis).